We begin with the raw amino-acid sequence, 380 residues long: F-box protein At4g18380 (380 aa).

An F-box domain is found at 22-70 (IDHFDNLPDSILLLIFNNIGDVKALGRCSVVSKRFHSLIPQVENVFVRV).

The protein is F-box protein At4g18380 of Arabidopsis thaliana (Mouse-ear cress).